A 204-amino-acid chain; its full sequence is Urease accessory protein UreG (204 aa).

Residue 12 to 19 (GPVGSGKT) participates in GTP binding.

Belongs to the SIMIBI class G3E GTPase family. UreG subfamily. As to quaternary structure, homodimer. UreD, UreF and UreG form a complex that acts as a GTP-hydrolysis-dependent molecular chaperone, activating the urease apoprotein by helping to assemble the nickel containing metallocenter of UreC. The UreE protein probably delivers the nickel.

It localises to the cytoplasm. In terms of biological role, facilitates the functional incorporation of the urease nickel metallocenter. This process requires GTP hydrolysis, probably effectuated by UreG. In Stutzerimonas stutzeri (strain A1501) (Pseudomonas stutzeri), this protein is Urease accessory protein UreG.